The following is a 161-amino-acid chain: Large ribosomal subunit protein bL17 (161 aa).

Positions 132–144 (ARAKRAEDNRKAL) are enriched in basic and acidic residues. Residues 132-161 (ARAKRAEDNRKALEAQQAQAEAETTGETKA) are disordered. Residues 145–161 (EAQQAQAEAETTGETKA) show a composition bias toward low complexity.

Belongs to the bacterial ribosomal protein bL17 family. Part of the 50S ribosomal subunit. Contacts protein L32.

In Koribacter versatilis (strain Ellin345), this protein is Large ribosomal subunit protein bL17.